We begin with the raw amino-acid sequence, 470 residues long: 3-isopropylmalate dehydratase large subunit (470 aa).

[4Fe-4S] cluster is bound by residues Cys347, Cys407, and Cys410.

It belongs to the aconitase/IPM isomerase family. LeuC type 1 subfamily. As to quaternary structure, heterodimer of LeuC and LeuD. Requires [4Fe-4S] cluster as cofactor.

It carries out the reaction (2R,3S)-3-isopropylmalate = (2S)-2-isopropylmalate. It functions in the pathway amino-acid biosynthesis; L-leucine biosynthesis; L-leucine from 3-methyl-2-oxobutanoate: step 2/4. Functionally, catalyzes the isomerization between 2-isopropylmalate and 3-isopropylmalate, via the formation of 2-isopropylmaleate. The chain is 3-isopropylmalate dehydratase large subunit from Shewanella amazonensis (strain ATCC BAA-1098 / SB2B).